A 239-amino-acid polypeptide reads, in one-letter code: Protein GrpE (239 aa).

2 disordered regions span residues 1-53 (MIEE…EDLK) and 210-239 (GPGQQISQESEEKDKVDKDIDSEGSISEEN). Basic and acidic residues-rich tracts occupy residues 34–53 (NEDKKLPDDNNEKIDAEDLK) and 219–230 (SEEKDKVDKDID).

The protein belongs to the GrpE family. As to quaternary structure, homodimer.

It localises to the cytoplasm. In terms of biological role, participates actively in the response to hyperosmotic and heat shock by preventing the aggregation of stress-denatured proteins, in association with DnaK and GrpE. It is the nucleotide exchange factor for DnaK and may function as a thermosensor. Unfolded proteins bind initially to DnaJ; upon interaction with the DnaJ-bound protein, DnaK hydrolyzes its bound ATP, resulting in the formation of a stable complex. GrpE releases ADP from DnaK; ATP binding to DnaK triggers the release of the substrate protein, thus completing the reaction cycle. Several rounds of ATP-dependent interactions between DnaJ, DnaK and GrpE are required for fully efficient folding. This chain is Protein GrpE, found in Prochlorococcus marinus (strain MIT 9515).